The chain runs to 386 residues: Patatin-04/09 (386 aa).

The signal sequence occupies residues 1-23 (MATTKSFLILFFMILATTSSTCA). The region spanning 32–229 (LSIDGGGIKG…TVGDPALLSL (198 aa)) is the PNPLA domain. Positions 36-41 (GGGIKG) match the GXGXXG motif. The GXSXG signature appears at 75–79 (GTSTG). S77 (nucleophile) is an active-site residue. A glycan (N-linked (GlcNAc...) asparagine) is linked at N115. The Proton acceptor role is filled by D215. The short motif at 215–217 (DGG) is the DGA/G element. The stretch at 321–384 (ENALNGTTTE…DRKKLRANKA (64 aa)) forms a coiled coil. N325 carries N-linked (GlcNAc...) asparagine glycosylation.

The protein belongs to the patatin family. In terms of tissue distribution, tuber.

Its subcellular location is the vacuole. Its function is as follows. Probable lipolytic acyl hydrolase (LAH), an activity which is thought to be involved in the response of tubers to pathogens. The protein is Patatin-04/09 of Solanum tuberosum (Potato).